A 524-amino-acid polypeptide reads, in one-letter code: Probable pectinesterase/pectinesterase inhibitor 42 (524 aa).

An N-terminal signal peptide occupies residues 1-22 (MLVKVFSFFILMITMVVIGVSK). The interval 23-172 (EYCDDKHSCQ…ISKAKVALAL (150 aa)) is pectinesterase inhibitor 42. The tract at residues 215-510 (DVVVAKDGTG…FTVAKLLDGE (296 aa)) is pectinesterase 42. N-linked (GlcNAc...) asparagine glycans are attached at residues Asn265 and Asn281. Thr290 contacts substrate. The active-site Proton donor; for pectinesterase activity is the Asp343. Cys357 and Cys377 are oxidised to a cystine. Asp364 functions as the Nucleophile; for pectinesterase activity in the catalytic mechanism. N-linked (GlcNAc...) asparagine glycosylation occurs at Asn412. Residues Arg430 and Trp432 each coordinate substrate.

It in the N-terminal section; belongs to the PMEI family. In the C-terminal section; belongs to the pectinesterase family. As to expression, expressed in siliques but not in flower buds.

The protein resides in the secreted. The protein localises to the cell wall. It catalyses the reaction [(1-&gt;4)-alpha-D-galacturonosyl methyl ester](n) + n H2O = [(1-&gt;4)-alpha-D-galacturonosyl](n) + n methanol + n H(+). It functions in the pathway glycan metabolism; pectin degradation; 2-dehydro-3-deoxy-D-gluconate from pectin: step 1/5. In terms of biological role, acts in the modification of cell walls via demethylesterification of cell wall pectin. This is Probable pectinesterase/pectinesterase inhibitor 42 (PME42) from Arabidopsis thaliana (Mouse-ear cress).